Here is a 185-residue protein sequence, read N- to C-terminus: Ribosome-recycling factor (185 aa).

The protein belongs to the RRF family.

The protein localises to the cytoplasm. Responsible for the release of ribosomes from messenger RNA at the termination of protein biosynthesis. May increase the efficiency of translation by recycling ribosomes from one round of translation to another. The protein is Ribosome-recycling factor of Corynebacterium diphtheriae (strain ATCC 700971 / NCTC 13129 / Biotype gravis).